The chain runs to 222 residues: 7-cyano-7-deazaguanine synthase (222 aa).

7 to 17 (LSGGLDSSTVL) provides a ligand contact to ATP. Zn(2+)-binding residues include Cys191, Cys199, Cys202, and Cys205.

This sequence belongs to the QueC family. The cofactor is Zn(2+).

The enzyme catalyses 7-carboxy-7-deazaguanine + NH4(+) + ATP = 7-cyano-7-deazaguanine + ADP + phosphate + H2O + H(+). The protein operates within purine metabolism; 7-cyano-7-deazaguanine biosynthesis. Its function is as follows. Catalyzes the ATP-dependent conversion of 7-carboxy-7-deazaguanine (CDG) to 7-cyano-7-deazaguanine (preQ(0)). In Trichodesmium erythraeum (strain IMS101), this protein is 7-cyano-7-deazaguanine synthase.